The following is a 330-amino-acid chain: Probable pectinesterase 55 (330 aa).

Positions 1–24 (MGTHRIILGLAALCCFCLPHLIEA) are cleaved as a signal peptide. 2 N-linked (GlcNAc...) asparagine glycosylation sites follow: Asn38 and Asn52. Asp161 functions as the Proton donor in the catalytic mechanism. Asp182 acts as the Nucleophile in catalysis. 2 residues coordinate substrate: Arg243 and Trp245. Residues Asn257 and Asn292 are each glycosylated (N-linked (GlcNAc...) asparagine).

Belongs to the pectinesterase family.

It localises to the secreted. The protein resides in the cell wall. It catalyses the reaction [(1-&gt;4)-alpha-D-galacturonosyl methyl ester](n) + n H2O = [(1-&gt;4)-alpha-D-galacturonosyl](n) + n methanol + n H(+). It participates in glycan metabolism; pectin degradation; 2-dehydro-3-deoxy-D-gluconate from pectin: step 1/5. In terms of biological role, acts in the modification of cell walls via demethylesterification of cell wall pectin. In Arabidopsis thaliana (Mouse-ear cress), this protein is Probable pectinesterase 55 (PME55).